Here is a 93-residue protein sequence, read N- to C-terminus: MFEQRVNSDVLTVATVNSQDQVTQKPLRDSVKQALKNYFAQLNGQDVNDLYELVLAEVEQPLLDMVMQYTRGNQTRAAQMMGINRGTLRKKLK.

Residues 74-93 (QTRAAQMMGINRGTLRKKLK) constitute a DNA-binding region (H-T-H motif).

The protein belongs to the transcriptional regulatory Fis family. Homodimer.

Activates ribosomal RNA transcription. Plays a direct role in upstream activation of rRNA promoters. The protein is DNA-binding protein Fis of Proteus vulgaris.